Consider the following 226-residue polypeptide: Phosphoribosylformylglycinamidine synthase subunit PurQ (226 aa).

In terms of domain architecture, Glutamine amidotransferase type-1 spans 2–226; sequence KIAVVVFPGS…LENGRIKVEA (225 aa). C86 acts as the Nucleophile in catalysis. Catalysis depends on residues H195 and E197.

Part of the FGAM synthase complex composed of 1 PurL, 1 PurQ and 2 PurS subunits.

The protein localises to the cytoplasm. It catalyses the reaction N(2)-formyl-N(1)-(5-phospho-beta-D-ribosyl)glycinamide + L-glutamine + ATP + H2O = 2-formamido-N(1)-(5-O-phospho-beta-D-ribosyl)acetamidine + L-glutamate + ADP + phosphate + H(+). The enzyme catalyses L-glutamine + H2O = L-glutamate + NH4(+). Its pathway is purine metabolism; IMP biosynthesis via de novo pathway; 5-amino-1-(5-phospho-D-ribosyl)imidazole from N(2)-formyl-N(1)-(5-phospho-D-ribosyl)glycinamide: step 1/2. Its function is as follows. Part of the phosphoribosylformylglycinamidine synthase complex involved in the purines biosynthetic pathway. Catalyzes the ATP-dependent conversion of formylglycinamide ribonucleotide (FGAR) and glutamine to yield formylglycinamidine ribonucleotide (FGAM) and glutamate. The FGAM synthase complex is composed of three subunits. PurQ produces an ammonia molecule by converting glutamine to glutamate. PurL transfers the ammonia molecule to FGAR to form FGAM in an ATP-dependent manner. PurS interacts with PurQ and PurL and is thought to assist in the transfer of the ammonia molecule from PurQ to PurL. This is Phosphoribosylformylglycinamidine synthase subunit PurQ from Limosilactobacillus reuteri (strain DSM 20016) (Lactobacillus reuteri).